The chain runs to 888 residues: Molybdenum cofactor sulfurase (888 aa).

Phosphoserine is present on S34. An N6-(pyridoxal phosphate)lysine modification is found at K264. The active site involves C424. A phosphoserine mark is found at S528 and S530. An MOSC domain is found at 706–867 (KQSSNSQRNA…LSVGSQVLPV (162 aa)).

This sequence belongs to the class-V pyridoxal-phosphate-dependent aminotransferase family. MOCOS subfamily. Pyridoxal 5'-phosphate is required as a cofactor.

The catalysed reaction is Mo-molybdopterin + L-cysteine + AH2 = thio-Mo-molybdopterin + L-alanine + A + H2O. Its pathway is cofactor biosynthesis; molybdopterin biosynthesis. Its function is as follows. Sulfurates the molybdenum cofactor. Sulfation of molybdenum is essential for xanthine dehydrogenase (XDH) and aldehyde oxidase (ADO) enzymes in which molybdenum cofactor is liganded by 1 oxygen and 1 sulfur atom in active form. In vitro, the C-terminal domain is able to reduce N-hydroxylated prodrugs, such as benzamidoxime. The protein is Molybdenum cofactor sulfurase of Homo sapiens (Human).